The chain runs to 329 residues: Beta-tectorin (329 aa).

The N-terminal stretch at 1-17 (MVVRAFVLLALFAEASA) is a signal peptide. Residues 19-283 (SCTPNKADVI…LSCPVNCDKR (265 aa)) enclose the ZP domain. Asparagine 80, asparagine 104, asparagine 116, and asparagine 145 each carry an N-linked (GlcNAc...) asparagine glycan. A disulfide bond links cysteine 204 and cysteine 264. Alanine 305 carries the GPI-anchor amidated alanine lipid modification. Residues 306–329 (FSGLCDFSDVLLHLILMLGTWAVL) constitute a propeptide, removed in mature form.

In terms of assembly, may form homomeric filament after self-association or heteromeric filament after association with alpha-tectorin. Interacts with CEACAM16. The presence of a hydrophobic C-terminus preceded by a potential cleavage site strongly suggests that tectorins are synthesized as glycosylphosphatidylinositol-linked, membrane-bound precursors. Tectorins are targeted to the apical surface of the inner ear epithelia by the lipid and proteolytically released into the extracellular compartment.

The protein localises to the cell membrane. Its subcellular location is the secreted. It localises to the extracellular space. It is found in the extracellular matrix. One of the major non-collagenous components of the tectorial membrane. The tectorial membrane is an extracellular matrix of the inner ear that covers the neuroepithelium of the cochlea and contacts the stereocilia bundles of specialized sensory hair cells. Sound induces movement of these hair cells relative to the tectorial membrane, deflects the stereocilia and leads to fluctuations in hair-cell membrane potential, transducing sound into electrical signals. The protein is Beta-tectorin (Tectb) of Mus musculus (Mouse).